The chain runs to 177 residues: MSRVAKAPVVLLAGVEVKLNGQEITVKGPKGELALVAHNAVVLTQEENTITFGPREGFDKAWAQAGTVRALVNNMVVGVTEGFTKKLTLKGVGYRANVAGNTVNLTLGFSHPVAHELPTGVKAECPSQTEIVLTGTDKQVIGQVAADIRAYRSPEPYKGKGVRYADEVVRTKEAKKK.

It belongs to the universal ribosomal protein uL6 family. Part of the 50S ribosomal subunit.

This protein binds to the 23S rRNA, and is important in its secondary structure. It is located near the subunit interface in the base of the L7/L12 stalk, and near the tRNA binding site of the peptidyltransferase center. This chain is Large ribosomal subunit protein uL6, found in Photobacterium profundum (strain SS9).